Here is a 469-residue protein sequence, read N- to C-terminus: Tetratricopeptide repeat protein 38 (469 aa).

TPR repeat units lie at residues 107-140 (REKL…HPTD), 179-212 (SYVK…ERTD), and 251-284 (CHVY…QCFA).

Belongs to the TTC38 family.

This chain is Tetratricopeptide repeat protein 38 (ttc38), found in Xenopus laevis (African clawed frog).